A 444-amino-acid polypeptide reads, in one-letter code: P2X purinoceptor 5 (444 aa).

Over 1 to 30 the chain is Cytoplasmic; that stretch reads MGQAGCKGLCLSLFDYKTEKYVIAKNKKVG. The chain crosses the membrane as a helical span at residues 31-51; that stretch reads LLYRLLQASILAYLVVWVFLI. The Extracellular portion of the chain corresponds to 52–319; that stretch reads KKGYQDVDTS…RTLMKAYGIR (268 aa). Residue N77 is glycosylated (N-linked (GlcNAc...) asparagine). Cystine bridges form between C118-C169, C129-C152, and C135-C163. N202 carries N-linked (GlcNAc...) asparagine glycosylation. Disulfide bonds link C220/C229 and C263/C272. A helical transmembrane segment spans residues 320 to 362; the sequence is FDVMVNGKAGKFSIIPTIINVGSGVALMGAGAFFCDLVLIYLI. Residues 363–444 lie on the Cytoplasmic side of the membrane; sequence KKREFYRDKK…PQLLEPHRST (82 aa). The disordered stretch occupies residues 378-444; it reads GLEDSSQEAE…PQLLEPHRST (67 aa).

It belongs to the P2X receptor family. In terms of assembly, functional P2XRs are organized as homomeric and heteromeric trimers. Homotrimer. Forms heterotrimer with P2RX1. As to expression, expressed at high levels in brain and immune system.

It localises to the cell membrane. The catalysed reaction is Na(+)(in) = Na(+)(out). It catalyses the reaction Ca(2+)(in) = Ca(2+)(out). The enzyme catalyses chloride(in) = chloride(out). Activated by ATP. Slowly desensitizing. Sensitive to the ATP agonist alpha/beta-methylene-ATP. ATP-gated nonselective transmembrane cation channel permeable to potassium, sodium and calcium. Unlike other P2RX receptors, the P2X5 receptor is also permeable to chloride. May play a supporting role in the inflammatory response. Functionally, non-functional. The protein is P2X purinoceptor 5 of Homo sapiens (Human).